Here is a 134-residue protein sequence, read N- to C-terminus: uncharacterized protein (134 aa).

One can recognise an HIT domain in the interval Ile4–Phe107. The Histidine triad motif motif lies at His91–His95.

This is an uncharacterized protein from Mycobacterium leprae (strain TN).